A 96-amino-acid chain; its full sequence is Large ribosomal subunit protein uL23 (96 aa).

This sequence belongs to the universal ribosomal protein uL23 family. As to quaternary structure, part of the 50S ribosomal subunit. Contacts protein L29, and trigger factor when it is bound to the ribosome.

Its function is as follows. One of the early assembly proteins it binds 23S rRNA. One of the proteins that surrounds the polypeptide exit tunnel on the outside of the ribosome. Forms the main docking site for trigger factor binding to the ribosome. This is Large ribosomal subunit protein uL23 from Desulfovibrio desulfuricans (strain ATCC 27774 / DSM 6949 / MB).